A 62-amino-acid chain; its full sequence is Snaclec aspercetin subunit alpha (62 aa).

Cysteines 2 and 13 form a disulfide. The C-type lectin domain occupies 9–62 (YEGHCYRFFHPPKDWADAERFCTEQAKGGALVSIQRFGEEDFVSNLITKNLQRG).

This sequence belongs to the snaclec family. In terms of assembly, heterodimer; disulfide-linked. Expressed by the venom gland.

The protein resides in the secreted. Its function is as follows. Snaclec that binds to von Willebrand factor (VWF) and induces its interaction with GPIbalpha (GP1BA) (via the vWF A1 domain), resulting in platelet aggregation. Intravenous injection in mice induces a dose-dependent drop in platelet count (thrombocytopenia). Pretreatment by intravenous injection by this protein in mice potentiates the hemorrhagic lesion in the skin provoked by the metalloproteinase BaP1 intradermally injected. This result is not observed when both BaP1 and this protein are injected simultaneously. This is Snaclec aspercetin subunit alpha from Bothrops asper (Terciopelo).